The primary structure comprises 475 residues: Exodeoxyribonuclease 7 large subunit (475 aa).

Residues 452 to 475 (DHGLNRSSKSKRIKSKQDDQGTLF) form a disordered region. Over residues 466–475 (SKQDDQGTLF) the composition is skewed to basic and acidic residues.

It belongs to the XseA family. As to quaternary structure, heterooligomer composed of large and small subunits.

The protein localises to the cytoplasm. The catalysed reaction is Exonucleolytic cleavage in either 5'- to 3'- or 3'- to 5'-direction to yield nucleoside 5'-phosphates.. Bidirectionally degrades single-stranded DNA into large acid-insoluble oligonucleotides, which are then degraded further into small acid-soluble oligonucleotides. The polypeptide is Exodeoxyribonuclease 7 large subunit (Bartonella quintana (strain Toulouse) (Rochalimaea quintana)).